The chain runs to 392 residues: Chorismate synthase (392 aa).

The NADP(+) site is built by R39 and R45. Residues 131 to 133 (RSS), 255 to 256 (NA), G300, 315 to 319 (KPIPT), and R341 each bind FMN.

The protein belongs to the chorismate synthase family. In terms of assembly, homotetramer. FMNH2 serves as cofactor.

It carries out the reaction 5-O-(1-carboxyvinyl)-3-phosphoshikimate = chorismate + phosphate. The protein operates within metabolic intermediate biosynthesis; chorismate biosynthesis; chorismate from D-erythrose 4-phosphate and phosphoenolpyruvate: step 7/7. In terms of biological role, catalyzes the anti-1,4-elimination of the C-3 phosphate and the C-6 proR hydrogen from 5-enolpyruvylshikimate-3-phosphate (EPSP) to yield chorismate, which is the branch point compound that serves as the starting substrate for the three terminal pathways of aromatic amino acid biosynthesis. This reaction introduces a second double bond into the aromatic ring system. This chain is Chorismate synthase, found in Leuconostoc mesenteroides subsp. mesenteroides (strain ATCC 8293 / DSM 20343 / BCRC 11652 / CCM 1803 / JCM 6124 / NCDO 523 / NBRC 100496 / NCIMB 8023 / NCTC 12954 / NRRL B-1118 / 37Y).